We begin with the raw amino-acid sequence, 154 residues long: Phosphopantetheine adenylyltransferase (154 aa).

Position 10 (Thr10) interacts with substrate. Residues 10 to 11 (TF) and His18 each bind ATP. Residues Lys42, Leu74, and Arg88 each coordinate substrate. Residues 89–91 (GLR), Glu99, and 124–130 (NAFISSS) contribute to the ATP site.

It belongs to the bacterial CoaD family. In terms of assembly, homohexamer. The cofactor is Mg(2+).

The protein resides in the cytoplasm. The catalysed reaction is (R)-4'-phosphopantetheine + ATP + H(+) = 3'-dephospho-CoA + diphosphate. It participates in cofactor biosynthesis; coenzyme A biosynthesis; CoA from (R)-pantothenate: step 4/5. Functionally, reversibly transfers an adenylyl group from ATP to 4'-phosphopantetheine, yielding dephospho-CoA (dPCoA) and pyrophosphate. In Nautilia profundicola (strain ATCC BAA-1463 / DSM 18972 / AmH), this protein is Phosphopantetheine adenylyltransferase.